The chain runs to 96 residues: MF6 protein (96 aa).

This chain is MF6 protein, found in Myxoma virus (strain Uriarra) (MYXV).